Reading from the N-terminus, the 274-residue chain is Penicillin-insensitive murein endopeptidase (274 aa).

Positions 1–19 (MKKTVIALLAWFVSSASLA) are cleaved as a signal peptide. 3 disulfide bridges follow: Cys-44/Cys-265, Cys-187/Cys-235, and Cys-216/Cys-223. His-110, His-113, Asp-120, Asp-147, His-150, and His-211 together coordinate Zn(2+). The interval 225–274 (DQPLPPPGDGCGAELQSWFEPPKPGTTKPEKKTPPPLPPSCQALLDEHVL) is disordered.

It belongs to the peptidase M74 family. As to quaternary structure, dimer. The cofactor is Zn(2+).

The protein localises to the periplasm. Murein endopeptidase that cleaves the D-alanyl-meso-2,6-diamino-pimelyl amide bond that connects peptidoglycan strands. Likely plays a role in the removal of murein from the sacculus. In Salmonella paratyphi C (strain RKS4594), this protein is Penicillin-insensitive murein endopeptidase.